A 666-amino-acid polypeptide reads, in one-letter code: DNA ligase (666 aa).

NAD(+) is bound by residues 31-35, 80-81, and Glu110; these read DKEFD and SL. Catalysis depends on Lys112, which acts as the N6-AMP-lysine intermediate. NAD(+)-binding residues include Arg133, Glu170, Lys285, and Lys309. Zn(2+) contacts are provided by Cys404, Cys407, Cys422, and Cys428. The BRCT domain maps to 588-666; sequence GYTDKLAGQS…SEDEFLKLIS (79 aa).

It belongs to the NAD-dependent DNA ligase family. LigA subfamily. Mg(2+) is required as a cofactor. It depends on Mn(2+) as a cofactor.

The enzyme catalyses NAD(+) + (deoxyribonucleotide)n-3'-hydroxyl + 5'-phospho-(deoxyribonucleotide)m = (deoxyribonucleotide)n+m + AMP + beta-nicotinamide D-nucleotide.. Its function is as follows. DNA ligase that catalyzes the formation of phosphodiester linkages between 5'-phosphoryl and 3'-hydroxyl groups in double-stranded DNA using NAD as a coenzyme and as the energy source for the reaction. It is essential for DNA replication and repair of damaged DNA. This is DNA ligase from Bacteroides thetaiotaomicron (strain ATCC 29148 / DSM 2079 / JCM 5827 / CCUG 10774 / NCTC 10582 / VPI-5482 / E50).